A 47-amino-acid polypeptide reads, in one-letter code: Photosystem II reaction center protein K (47 aa).

The propeptide occupies 1 to 10; sequence MNIGFDMILA. A helical membrane pass occupies residues 22 to 42; that stretch reads LVDVLPVIPLLFLLLAFVWQA.

Belongs to the PsbK family. PSII is composed of 1 copy each of membrane proteins PsbA, PsbB, PsbC, PsbD, PsbE, PsbF, PsbH, PsbI, PsbJ, PsbK, PsbL, PsbM, PsbT, PsbX, PsbY, PsbZ, Psb30/Ycf12, at least 3 peripheral proteins of the oxygen-evolving complex and a large number of cofactors. It forms dimeric complexes.

It localises to the plastid. The protein localises to the chloroplast thylakoid membrane. One of the components of the core complex of photosystem II (PSII). PSII is a light-driven water:plastoquinone oxidoreductase that uses light energy to abstract electrons from H(2)O, generating O(2) and a proton gradient subsequently used for ATP formation. It consists of a core antenna complex that captures photons, and an electron transfer chain that converts photonic excitation into a charge separation. The polypeptide is Photosystem II reaction center protein K (Mesostigma viride (Green alga)).